The following is a 219-amino-acid chain: GTP cyclohydrolase-2 (219 aa).

51–55 contacts GTP; sequence RIHSE. Cysteine 56, cysteine 67, and cysteine 69 together coordinate Zn(2+). GTP contacts are provided by residues glutamine 72, 94 to 96, and threonine 116; that span reads EGR. Aspartate 128 serves as the catalytic Proton acceptor. Catalysis depends on arginine 130, which acts as the Nucleophile. Positions 151 and 156 each coordinate GTP.

It belongs to the GTP cyclohydrolase II family. The cofactor is Zn(2+).

It carries out the reaction GTP + 4 H2O = 2,5-diamino-6-hydroxy-4-(5-phosphoribosylamino)-pyrimidine + formate + 2 phosphate + 3 H(+). The protein operates within cofactor biosynthesis; riboflavin biosynthesis; 5-amino-6-(D-ribitylamino)uracil from GTP: step 1/4. Functionally, catalyzes the conversion of GTP to 2,5-diamino-6-ribosylamino-4(3H)-pyrimidinone 5'-phosphate (DARP), formate and pyrophosphate. This chain is GTP cyclohydrolase-2, found in Pasteurella multocida (strain Pm70).